The sequence spans 165 residues: Xanthine-guanine phosphoribosyltransferase (165 aa).

5-phospho-alpha-D-ribose 1-diphosphate is bound by residues 41-42 (RG) and 98-106 (DDLTDTGKT). Asp99 serves as a coordination point for Mg(2+). Positions 102 and 145 each coordinate guanine. Xanthine contacts are provided by Asp102 and Ile145. GMP-binding positions include 102 to 106 (DTGKT) and 144 to 145 (WI).

The protein belongs to the purine/pyrimidine phosphoribosyltransferase family. XGPT subfamily. Homotetramer. Mg(2+) serves as cofactor.

The protein localises to the cell inner membrane. It catalyses the reaction GMP + diphosphate = guanine + 5-phospho-alpha-D-ribose 1-diphosphate. It carries out the reaction XMP + diphosphate = xanthine + 5-phospho-alpha-D-ribose 1-diphosphate. The catalysed reaction is IMP + diphosphate = hypoxanthine + 5-phospho-alpha-D-ribose 1-diphosphate. Its pathway is purine metabolism; GMP biosynthesis via salvage pathway; GMP from guanine: step 1/1. It functions in the pathway purine metabolism; XMP biosynthesis via salvage pathway; XMP from xanthine: step 1/1. Its function is as follows. Purine salvage pathway enzyme that catalyzes the transfer of the ribosyl-5-phosphate group from 5-phospho-alpha-D-ribose 1-diphosphate (PRPP) to the N9 position of the 6-oxopurines guanine and xanthine to form the corresponding ribonucleotides GMP (guanosine 5'-monophosphate) and XMP (xanthosine 5'-monophosphate), with the release of PPi. To a lesser extent, also acts on hypoxanthine. The protein is Xanthine-guanine phosphoribosyltransferase of Sinorhizobium medicae (strain WSM419) (Ensifer medicae).